The sequence spans 225 residues: Uracil-DNA glycosylase (225 aa).

The active-site Proton acceptor is the Asp64.

Belongs to the uracil-DNA glycosylase (UDG) superfamily. UNG family.

It is found in the cytoplasm. The enzyme catalyses Hydrolyzes single-stranded DNA or mismatched double-stranded DNA and polynucleotides, releasing free uracil.. Its function is as follows. Excises uracil residues from the DNA which can arise as a result of misincorporation of dUMP residues by DNA polymerase or due to deamination of cytosine. The protein is Uracil-DNA glycosylase of Agathobacter rectalis (strain ATCC 33656 / DSM 3377 / JCM 17463 / KCTC 5835 / VPI 0990) (Eubacterium rectale).